A 135-amino-acid polypeptide reads, in one-letter code: Ribosome-binding factor A (135 aa).

This sequence belongs to the RbfA family. In terms of assembly, monomer. Binds 30S ribosomal subunits, but not 50S ribosomal subunits or 70S ribosomes.

The protein localises to the cytoplasm. Functionally, one of several proteins that assist in the late maturation steps of the functional core of the 30S ribosomal subunit. Associates with free 30S ribosomal subunits (but not with 30S subunits that are part of 70S ribosomes or polysomes). Required for efficient processing of 16S rRNA. May interact with the 5'-terminal helix region of 16S rRNA. In Rhodopseudomonas palustris (strain HaA2), this protein is Ribosome-binding factor A.